Consider the following 224-residue polypeptide: Peptidyl-prolyl cis-trans isomerase FKBP3 (224 aa).

Ala2 carries the post-translational modification N-acetylalanine. Ser36 carries the phosphoserine modification. Positions 87 to 119 (NVKLNEDKPKETKSEETPDEGPPKYTKSVLKKG) are disordered. Positions 89–102 (KLNEDKPKETKSEE) are enriched in basic and acidic residues. The residue at position 99 (Lys99) is an N6-acetyllysine. The 97-residue stretch at 128-224 (GDVVHCWYTG…IFEVELVDID (97 aa)) folds into the PPIase FKBP-type domain. Phosphoserine is present on Ser152. Position 170 is an N6-acetyllysine (Lys170).

This sequence belongs to the FKBP-type PPIase family.

It localises to the nucleus. It carries out the reaction [protein]-peptidylproline (omega=180) = [protein]-peptidylproline (omega=0). Its activity is regulated as follows. Inhibited preferentially by rapamycin over FK506. Its function is as follows. FK506- and rapamycin-binding proteins (FKBPs) constitute a family of receptors for the two immunosuppressants which inhibit T-cell proliferation by arresting two distinct cytoplasmic signal transmission pathways. PPIases accelerate the folding of proteins. This is Peptidyl-prolyl cis-trans isomerase FKBP3 (FKBP3) from Oryctolagus cuniculus (Rabbit).